Here is a 189-residue protein sequence, read N- to C-terminus: GTP cyclohydrolase 1 (189 aa).

3 residues coordinate Zn(2+): C78, H81, and C150.

Belongs to the GTP cyclohydrolase I family. Toroid-shaped homodecamer, composed of two pentamers of five dimers.

The enzyme catalyses GTP + H2O = 7,8-dihydroneopterin 3'-triphosphate + formate + H(+). It participates in cofactor biosynthesis; 7,8-dihydroneopterin triphosphate biosynthesis; 7,8-dihydroneopterin triphosphate from GTP: step 1/1. This Bacillus pumilus (strain SAFR-032) protein is GTP cyclohydrolase 1.